We begin with the raw amino-acid sequence, 281 residues long: 2,3,4,5-tetrahydropyridine-2,6-dicarboxylate N-succinyltransferase (281 aa).

2 residues coordinate substrate: Arg108 and Asp145.

This sequence belongs to the transferase hexapeptide repeat family. As to quaternary structure, homotrimer.

The protein localises to the cytoplasm. It carries out the reaction (S)-2,3,4,5-tetrahydrodipicolinate + succinyl-CoA + H2O = (S)-2-succinylamino-6-oxoheptanedioate + CoA. It functions in the pathway amino-acid biosynthesis; L-lysine biosynthesis via DAP pathway; LL-2,6-diaminopimelate from (S)-tetrahydrodipicolinate (succinylase route): step 1/3. The polypeptide is 2,3,4,5-tetrahydropyridine-2,6-dicarboxylate N-succinyltransferase (Rhodopseudomonas palustris (strain BisB5)).